The sequence spans 237 residues: MYEVDHADVYDLFYLGRGKDYAAEASDIADLVRSRTPEASSLLDVACGTGTHLEHFTKEFGDTAGLELSEDMLTHARKRLPDATLHQGDMRDFRLGRKFSAVVSMFSSVGYLKTTEELGAAVASFAEHLEPGGVVVVEPWWFPETFADGWVSADVVRRDGRTVARVSHSVREGNATRMEVHFTVADPGKGVRHFSDVHLITLFHQAEYEAAFTAAGLRVEYLEGGPSGRGLFVGVPA.

Substrate contacts are provided by Tyr14 and Arg17. S-adenosyl-L-methionine contacts are provided by residues Tyr21, Ala46, Glu67, 89-90 (DM), and Met105. Residues 145-147 (TFA), Ser152, 165-169 (RVSHS), and Arg229 each bind substrate.

It belongs to the methyltransferase TylM1/DesVI family. In terms of assembly, homodimer.

It carries out the reaction dTDP-3-amino-3,4,6-trideoxy-alpha-D-glucose + 2 S-adenosyl-L-methionine = dTDP-alpha-D-desosamine + 2 S-adenosyl-L-homocysteine + 2 H(+). Its pathway is antibiotic biosynthesis. Functionally, S-adenosyl-L-methionine-dependent methyltransferase involved in the biosynthesis of desosamine, found in certain macrolide antibiotics such as erthyromycin, azithromycin, clarithromycin, and methymycin. Catalyzes the last step in the biosynthesis of dTDP-desosamine, i.e. the N,N-dimethylation of the 3-amino group of dTDP-3-amino-3,4,6-trideoxy-alpha-D-glucose. This chain is dTDP-3-amino-3,4,6-trideoxy-alpha-D-glucopyranose N,N-dimethyltransferase, found in Streptomyces venezuelae.